Reading from the N-terminus, the 123-residue chain is Large ribosomal subunit protein bL20 (123 aa).

This sequence belongs to the bacterial ribosomal protein bL20 family.

Functionally, binds directly to 23S ribosomal RNA and is necessary for the in vitro assembly process of the 50S ribosomal subunit. It is not involved in the protein synthesizing functions of that subunit. In Pseudothermotoga lettingae (strain ATCC BAA-301 / DSM 14385 / NBRC 107922 / TMO) (Thermotoga lettingae), this protein is Large ribosomal subunit protein bL20.